Consider the following 248-residue polypeptide: Fasciclin-like arabinogalactan protein 19 (248 aa).

The first 29 residues, 1 to 29 (MAKISSASCFRAIFLGALIILCLPHPSTG), serve as a signal peptide directing secretion. Positions 35-166 (LERAIAILRV…IAVHGLADLL (132 aa)) constitute an FAS1 domain. N-linked (GlcNAc...) asparagine glycosylation is found at N114 and N136. The segment covering 213-226 (SPSVEEVSPSPSWG) has biased composition (low complexity). Residues 213–248 (SPSVEEVSPSPSWGEGEEDFIVGDEGGPLDGRNNGF) are disordered.

Belongs to the fasciclin-like AGP family.

It is found in the secreted. In terms of biological role, may be a cell surface adhesion protein. The sequence is that of Fasciclin-like arabinogalactan protein 19 (FLA19) from Arabidopsis thaliana (Mouse-ear cress).